The primary structure comprises 363 residues: 3-dehydroquinate synthase (363 aa).

NAD(+) is bound by residues 134-135 (TT), K147, and K156. The Zn(2+) site is built by E189, H254, and H271.

Belongs to the sugar phosphate cyclases superfamily. Dehydroquinate synthase family. Requires Co(2+) as cofactor. The cofactor is Zn(2+). NAD(+) serves as cofactor.

The protein resides in the cytoplasm. The enzyme catalyses 7-phospho-2-dehydro-3-deoxy-D-arabino-heptonate = 3-dehydroquinate + phosphate. Its pathway is metabolic intermediate biosynthesis; chorismate biosynthesis; chorismate from D-erythrose 4-phosphate and phosphoenolpyruvate: step 2/7. Its function is as follows. Catalyzes the conversion of 3-deoxy-D-arabino-heptulosonate 7-phosphate (DAHP) to dehydroquinate (DHQ). The sequence is that of 3-dehydroquinate synthase from Prochlorococcus marinus (strain MIT 9312).